The sequence spans 413 residues: Large ribosomal subunit protein uL4 (413 aa).

At Ala-2 the chain carries N-acetylalanine. Lys-14 is subject to N6-acetyllysine. Arg-97 is modified (omega-N-methylarginine). N6-acetyllysine is present on Lys-106. Residue Lys-239 forms a Glycyl lysine isopeptide (Lys-Gly) (interchain with G-Cter in SUMO2) linkage. Lys-259 bears the N6-acetyllysine mark. At Thr-266 the chain carries Phosphothreonine. Phosphoserine is present on residues Ser-290 and Ser-295. Arg-300 carries the citrulline modification. A Glycyl lysine isopeptide (Lys-Gly) (interchain with G-Cter in SUMO2) cross-link involves residue Lys-327. The residue at position 333 (Lys-333) is an N6-acetyllysine. A disordered region spans residues 355 to 413; the sequence is AAALAAKSDPKEAPAKKKPVVGKKKKPVVGRKAAAAKKPAADKKAADKRAGPEDKKPAA. The residue at position 361 (Lys-361) is an N6-acetyllysine; alternate. A Glycyl lysine isopeptide (Lys-Gly) (interchain with G-Cter in SUMO1); alternate cross-link involves residue Lys-361. Ser-362 carries the post-translational modification Phosphoserine. The segment covering 370–383 has biased composition (basic residues); sequence KKKPVVGKKKKPVV. Basic and acidic residues predominate over residues 393 to 413; the sequence is PAADKKAADKRAGPEDKKPAA.

Belongs to the universal ribosomal protein uL4 family. As to quaternary structure, component of the large ribosomal subunit. May bind IPO9 with low affinity. Interacts with RBM3. Citrullinated by PADI4.

It is found in the cytoplasm. Functionally, component of the large ribosomal subunit. The ribosome is a large ribonucleoprotein complex responsible for the synthesis of proteins in the cell. This chain is Large ribosomal subunit protein uL4 (RPL4), found in Oryctolagus cuniculus (Rabbit).